Here is a 217-residue protein sequence, read N- to C-terminus: Cytidylate kinase (217 aa).

ATP is bound at residue 11-19 (GPAGAGKST).

It belongs to the cytidylate kinase family. Type 1 subfamily.

It is found in the cytoplasm. It carries out the reaction CMP + ATP = CDP + ADP. The enzyme catalyses dCMP + ATP = dCDP + ADP. The polypeptide is Cytidylate kinase (Clostridium perfringens (strain SM101 / Type A)).